We begin with the raw amino-acid sequence, 208 residues long: Redox-sensing transcriptional repressor Rex (208 aa).

The segment at residues 16 to 55 is a DNA-binding region (H-T-H motif); it reads VYSRYLENLYRKGITTVSSADIAQGVGVTSAQVRKDLAYF. Residue 90-95 participates in NAD(+) binding; the sequence is GAGNLG.

Belongs to the transcriptional regulatory Rex family. Homodimer.

It localises to the cytoplasm. Its function is as follows. Modulates transcription in response to changes in cellular NADH/NAD(+) redox state. The polypeptide is Redox-sensing transcriptional repressor Rex (Carboxydothermus hydrogenoformans (strain ATCC BAA-161 / DSM 6008 / Z-2901)).